A 106-amino-acid polypeptide reads, in one-letter code: Stress-responsive protein 1 (106 aa).

The protein resides in the mitochondrion. Functionally, stress-responsive protein that may play a role in regulation of cell cycle. The chain is Stress-responsive protein 1 (sro1) from Schizosaccharomyces pombe (strain 972 / ATCC 24843) (Fission yeast).